The chain runs to 357 residues: Neutral protease 2 homolog BDCG_00922 (357 aa).

An N-terminal signal peptide occupies residues 1-19 (MRSPQSILAIVAFATTAIA). Positions 20-182 (GVVPSTEKRA…FASLNQFSKR (163 aa)) are excised as a propeptide. Disulfide bonds link cysteine 188–cysteine 259, cysteine 266–cysteine 284, and cysteine 297–cysteine 357. Histidine 308 contacts Zn(2+). Glutamate 309 is a catalytic residue. Zn(2+)-binding residues include histidine 312 and aspartate 323.

The protein belongs to the peptidase M35 family. It depends on Zn(2+) as a cofactor.

The protein resides in the secreted. It catalyses the reaction Preferential cleavage of bonds with hydrophobic residues in P1'. Also 3-Asn-|-Gln-4 and 8-Gly-|-Ser-9 bonds in insulin B chain.. In terms of biological role, secreted metalloproteinase that allows assimilation of proteinaceous substrates. Shows high activities on basic nuclear substrates such as histone and protamine. This chain is Neutral protease 2 homolog BDCG_00922, found in Ajellomyces dermatitidis (strain ER-3 / ATCC MYA-2586) (Blastomyces dermatitidis).